We begin with the raw amino-acid sequence, 37 residues long: Glucagon-1 (37 aa).

It belongs to the glucagon family.

It localises to the secreted. Glucagon plays a key role in glucose metabolism and homeostasis. Regulates blood glucose by increasing gluconeogenesis and decreasing glycolysis. In Huso dauricus (Kaluga sturgeon), this protein is Glucagon-1.